We begin with the raw amino-acid sequence, 972 residues long: MISNKRKEIENINRHHEKDNDDDDSDGIDNGLLTYKKFKKDFDSGSTNYRELQIIAKSLGLASNGKKQLVYNRIEGYFLSKKVKNNLTNNETNQQEEKKEEEQQQPQPQEKQYILTFKDVEPVEIYFWKVFRNIVIFKHIFSNFKNKQYGYYDLIGCNGVFLNGKSNSMEIIIDNIKSNNNNQIIRNKYNITNIINKFKKNDEKTRSFYNLLFSRYSSTSTSLPIQLSSTIQFDEDIDKWIQRMIENVNFTALDQFIKFFKIDSEVIKKAIKIHVKPSVFGNTTYDKLKIYNYLKSINSIPTSHKLLPFISTDLSAFLSFDNKFKKLIKSYKRLIESTNLQERMEQQEQKEKIKIHPNNKKYYEKLNQKILELNEIQTSQFTNDQLNSTIKNLLNHTTPTSTSTSTSTSTSTLTLTLTPTTNLTITTSTASNNINLKDIIKKFYKSICLFFYCSVYSANERLFRKPLLYYLNFKKESVDKMYERVVNKWNGRSFDHQLFFQSILKDINIEKNEKFELILNVLDNKYVKTFEEYDHYIFFKAVFSSNDIELIDYFLKKIKQLQLNQTQKITKYPSIGKLIGDYCHLIDKKEILDFYFQNYRDECLFFKDQNEIWKQIQLELIEHYEYLMDSIGKRCKLDFYRWFDQNFLDRLNIAILKPSVYSIGFDGYFDIVSEGLVDSNIKDNKENSIINFLSNAQLKHPLSLEIFESSFNPYTSKMLTFIKFLFNNISKESIETKLKVINLKTDNKSFEEINSKIELTTTLTATTTTTTTTTTTKTTTTTTTTANLLSPKKSKDVGCLTIGKTESFNFTISIRMLLVCLYNLDRVDDIIYLFDKLPEVLFNPDYFSIFTNEYCIYGISSSYYLELFINYFIANINDNTINYLYNCLCIASKKGYTQIFKNIISSDQNSKYLLKIQTKSNQSSLFNSKLLNDIVVKSINSLNFELSNLLIDFIDFSAKDKNSLKMKILKLK.

Basic and acidic residues predominate over residues 1–19; that stretch reads MISNKRKEIENINRHHEKD. The segment at 1-30 is disordered; that stretch reads MISNKRKEIENINRHHEKDNDDDDSDGIDN. In terms of domain architecture, SAP spans 44–78; it reads SGSTNYRELQIIAKSLGLASNGKKQLVYNRIEGYF.

It belongs to the UPF0746 family.

In Dictyostelium discoideum (Social amoeba), this protein is UPF0746 protein DDB_G0280785.